A 273-amino-acid polypeptide reads, in one-letter code: Dermonecrotic toxin LdSicTox-alphaIB3b (273 aa).

Histidine 5 is an active-site residue. Residues glutamate 25 and aspartate 27 each contribute to the Mg(2+) site. Histidine 41 (nucleophile) is an active-site residue. Disulfide bonds link cysteine 45-cysteine 51 and cysteine 47-cysteine 190. Residue aspartate 85 participates in Mg(2+) binding.

The protein belongs to the arthropod phospholipase D family. Class II subfamily. Requires Mg(2+) as cofactor. In terms of tissue distribution, expressed by the venom gland.

It localises to the secreted. It carries out the reaction an N-(acyl)-sphingosylphosphocholine = an N-(acyl)-sphingosyl-1,3-cyclic phosphate + choline. The catalysed reaction is an N-(acyl)-sphingosylphosphoethanolamine = an N-(acyl)-sphingosyl-1,3-cyclic phosphate + ethanolamine. The enzyme catalyses a 1-acyl-sn-glycero-3-phosphocholine = a 1-acyl-sn-glycero-2,3-cyclic phosphate + choline. It catalyses the reaction a 1-acyl-sn-glycero-3-phosphoethanolamine = a 1-acyl-sn-glycero-2,3-cyclic phosphate + ethanolamine. In terms of biological role, dermonecrotic toxins cleave the phosphodiester linkage between the phosphate and headgroup of certain phospholipids (sphingolipid and lysolipid substrates), forming an alcohol (often choline) and a cyclic phosphate. This toxin acts on sphingomyelin (SM). It may also act on ceramide phosphoethanolamine (CPE), lysophosphatidylcholine (LPC) and lysophosphatidylethanolamine (LPE), but not on lysophosphatidylserine (LPS), and lysophosphatidylglycerol (LPG). It acts by transphosphatidylation, releasing exclusively cyclic phosphate products as second products. Induces dermonecrosis, hemolysis, increased vascular permeability, edema, inflammatory response, and platelet aggregation. The protein is Dermonecrotic toxin LdSicTox-alphaIB3b of Loxosceles deserta (Desert recluse spider).